The following is a 141-amino-acid chain: Hemoglobin subunit alpha-1 (141 aa).

The Globin domain occupies V1 to R141. An O2-binding site is contributed by H58. H87 lines the heme b pocket.

Belongs to the globin family. As to quaternary structure, heterotetramer of two alpha chains and two beta chains. Red blood cells.

In terms of biological role, involved in oxygen transport from the lung to the various peripheral tissues. The chain is Hemoglobin subunit alpha-1 from Tachyglossus aculeatus aculeatus (Southeast Australian short-beaked echidna).